A 526-amino-acid polypeptide reads, in one-letter code: Cytochrome P450 4e2 (526 aa).

2 residues coordinate heme: E307 and C444.

It belongs to the cytochrome P450 family. It depends on heme as a cofactor.

Its subcellular location is the endoplasmic reticulum membrane. It is found in the microsome membrane. Functionally, may be involved in the metabolism of insect hormones and in the breakdown of synthetic insecticides. The polypeptide is Cytochrome P450 4e2 (Cyp4e2) (Drosophila melanogaster (Fruit fly)).